The following is an 866-amino-acid chain: N-alpha-acetyltransferase 15, NatA auxiliary subunit (866 aa).

4 TPR repeats span residues 46-79 (GETL…DLKS), 80-113 (HVCW…DKDN), 148-184 (RASW…SPDK), and 224-257 (LAVE…NPEN). The residue at position 262 (K262) is an N6-acetyllysine. At S302 the chain carries Phosphoserine. TPR repeat units follow at residues 374–407 (LWVQ…TPTL), 409–441 (ELFL…DTAD), and 485–522 (MWFQ…TDDQ). The tract at residues 500 to 866 (KFGEALKKCY…AEAEELANEI (367 aa)) is interaction with HYPK. Phosphoserine occurs at positions 537 and 588. Positions 579–594 (EHEADTANMSDKELKK) are enriched in basic and acidic residues. Residues 579–642 (EHEADTANMS…EEIGGPKEEL (64 aa)) are disordered. A compositionally biased stretch (basic residues) spans 595 to 604 (LRNKQRRAQK). Residues 606 to 621 (AQIEEEKKNAEKEKQQ) show a composition bias toward basic and acidic residues. One copy of the TPR 8 repeat lies at 672-705 (IETHLFAFEIYFRKEKFLLMLQSVKRAFAIDSSH). Residues K735 and K756 each carry the N6-acetyllysine modification. Residues S855 and S856 each carry the phosphoserine modification.

As to quaternary structure, component of the N-terminal acetyltransferase A (NatA) complex composed of NAA10 or probably NAA11 and NAA15. Interacts with XRCC6, NAA50 and XRCC5. Associates with HYPK when in a complex with NAA10. Interaction with HYPK reduces the capacity to interact with NAA50. Cleaved by caspases during apoptosis.

It localises to the cytoplasm. Its subcellular location is the nucleus. In terms of biological role, auxillary subunit of the N-terminal acetyltransferase A (NatA) complex which displays alpha (N-terminal) acetyltransferase activity. The NAT activity may be important for vascular, hematopoietic and neuronal growth and development. Required to control retinal neovascularization in adult ocular endothelial cells. In complex with XRCC6 and XRCC5 (Ku80), up-regulates transcription from the osteocalcin promoter. This Pongo abelii (Sumatran orangutan) protein is N-alpha-acetyltransferase 15, NatA auxiliary subunit (NAA15).